We begin with the raw amino-acid sequence, 216 residues long: Somatotropin (216 aa).

The first 26 residues, 1-26, serve as a signal peptide directing secretion; that stretch reads MAADSQTSRLLTFTLLCLLWPQEAGA. His-45 serves as a coordination point for Zn(2+). Cys-78 and Cys-189 are joined by a disulfide. Ser-131 carries the post-translational modification Phosphoserine. Zn(2+) is bound at residue Glu-198. Cys-206 and Cys-214 are disulfide-bonded.

The protein belongs to the somatotropin/prolactin family.

The protein resides in the secreted. Functionally, plays an important role in growth control. Its major role in stimulating body growth is to stimulate the liver and other tissues to secrete IGF1. It stimulates both the differentiation and proliferation of myoblasts. It also stimulates amino acid uptake and protein synthesis in muscle and other tissues. This chain is Somatotropin (GH1), found in Mesocricetus auratus (Golden hamster).